A 443-amino-acid chain; its full sequence is Protein UIP5 (443 aa).

Residues 1–27 (MSRDVRAEKLAISLLILSLFLIFQLVA) form the signal peptide. Residues 28–398 (EIYLNNGDQY…LFKVVLTIWH (371 aa)) lie on the Perinuclear space side of the membrane. Residues 399-420 (YSEILLLIMGIYLFSACIRVFQ) form a helical membrane-spanning segment. Topologically, residues 421–443 (RRFKKIRSRRKRAGSHSVGLLPM) are cytoplasmic.

It is found in the nucleus membrane. The polypeptide is Protein UIP5 (UIP5) (Saccharomyces cerevisiae (strain ATCC 204508 / S288c) (Baker's yeast)).